We begin with the raw amino-acid sequence, 364 residues long: Aminomethyltransferase (364 aa).

Belongs to the GcvT family. As to quaternary structure, the glycine cleavage system is composed of four proteins: P, T, L and H.

The enzyme catalyses N(6)-[(R)-S(8)-aminomethyldihydrolipoyl]-L-lysyl-[protein] + (6S)-5,6,7,8-tetrahydrofolate = N(6)-[(R)-dihydrolipoyl]-L-lysyl-[protein] + (6R)-5,10-methylene-5,6,7,8-tetrahydrofolate + NH4(+). In terms of biological role, the glycine cleavage system catalyzes the degradation of glycine. The polypeptide is Aminomethyltransferase (Escherichia coli O157:H7).